Reading from the N-terminus, the 424-residue chain is Glutamate-1-semialdehyde 2,1-aminomutase (424 aa).

An N6-(pyridoxal phosphate)lysine modification is found at K260.

Belongs to the class-III pyridoxal-phosphate-dependent aminotransferase family. HemL subfamily. Requires pyridoxal 5'-phosphate as cofactor.

Its subcellular location is the cytoplasm. It catalyses the reaction (S)-4-amino-5-oxopentanoate = 5-aminolevulinate. The protein operates within porphyrin-containing compound metabolism; protoporphyrin-IX biosynthesis; 5-aminolevulinate from L-glutamyl-tRNA(Glu): step 2/2. The polypeptide is Glutamate-1-semialdehyde 2,1-aminomutase (Nitrosopumilus maritimus (strain SCM1)).